We begin with the raw amino-acid sequence, 409 residues long: Tetracenomycin polyketide synthase ketoacyl synthase beta subunit (409 aa).

The 404-residue stretch at 4 to 407 folds into the Ketosynthase family 3 (KS3) domain; that stretch reads PAPVVVTGLG…GFNSALVVRR (404 aa).

The protein belongs to the thiolase-like superfamily. Beta-ketoacyl-ACP synthases family. As to quaternary structure, the tetracenomycin polyketide synthase (TCM PKS) is composed of a ketosynthase complex (TcmKL), an acyl carrier protein (TcmM), a cyclase (TcmN) and a probable second cyclase (TcmJ). TcmK and TcmL form a heterodimeric complex.

It catalyses the reaction 10 malonyl-CoA + 8 H(+) = tetracenomycin F2 + 10 CO2 + 10 CoA + 2 H2O. It participates in antibiotic biosynthesis; tetracenomycin C biosynthesis. In terms of biological role, involved in the biosynthesis of tetracenomycin C (TCM C). Part of a type II polyketide synthase (PKS) that catalyzes the synthesis of tetracenomycin F2 (TCM F2), a precursor of TCM C, from malonyl-CoA. TcmK and TcmL form a heterodimeric alpha-beta complex that catalyzes the condensation reactions between the growing acyl-enzyme chain and the malonyl-CoA extender units. This is Tetracenomycin polyketide synthase ketoacyl synthase beta subunit from Streptomyces glaucescens.